The following is a 543-amino-acid chain: CBS domain-containing protein CBSCBSPB1 (543 aa).

A disordered region spans residues 1-35; sequence MASQGGPRRSLSVTTASLHGKKKSMDMAERGLDTG. Ser17 is modified (phosphoserine). Positions 23–35 are enriched in basic and acidic residues; that stretch reads KSMDMAERGLDTG. CBS domains lie at 59–118, 125–183, 225–285, and 293–350; these read RLSK…NVEE, MTKN…RAAE, IIPD…LPPS, and MTQN…AGTT. Residues 372 to 393 form a disordered region; it reads LSPNEDDEDSRSESSMKVASEA. One can recognise a PB1 domain in the interval 402–489; it reads ANTFSFKIED…KSLRLHLDDS (88 aa). A helical transmembrane segment spans residues 518 to 538; sequence AYSGVAAGAALVAGLGFMAFL.

It localises to the membrane. This chain is CBS domain-containing protein CBSCBSPB1 (CBSCBSPB1), found in Arabidopsis thaliana (Mouse-ear cress).